Here is a 79-residue protein sequence, read N- to C-terminus: Acyl carrier protein (79 aa).

The region spanning 3–78 is the Carrier domain; the sequence is QEILEKVRSI…DAVSYIQEKK (76 aa). Residue serine 38 is modified to O-(pantetheine 4'-phosphoryl)serine.

The protein belongs to the acyl carrier protein (ACP) family. 4'-phosphopantetheine is transferred from CoA to a specific serine of apo-ACP by AcpS. This modification is essential for activity because fatty acids are bound in thioester linkage to the sulfhydryl of the prosthetic group.

The protein resides in the cytoplasm. It participates in lipid metabolism; fatty acid biosynthesis. Its function is as follows. Carrier of the growing fatty acid chain in fatty acid biosynthesis. This Synechococcus sp. (strain RCC307) protein is Acyl carrier protein.